Consider the following 399-residue polypeptide: MSIISTQLNAIKPSPTLAVVRKTLELKRAGIDIIALGAGEPDFDTPDNIKEAAIKAIKDGFTKYTNVEGIPALKEAIQAKFKRENNIDYDLEEIIVSTGGKQVIYNLFMASLNKGDEVIIPAPYWVSYPDMVLLAEGTPVFANCGIESNFKLSGEALEQLITPKTKWLIINSPSNPTGASYSHSELKNIAEVLRKHPYVNVMSDDIYEHITFDGFKFYTLAEIAPDLKDRIFTVNGVSKAYSMTGWRIGYGAGSKALIKAMTIIQSQSTSNPCSISQVAAVEALNGVQGYIAQNALNFEKKRDLALSILQRVKYFECYKPEGAFYLFIKCDKIFGAKTKSGKVINNSNDFGEYLLEEAKVAVVPGIAFGLEGYFRISYATSMEELEEACLRMERACGSL.

3 residues coordinate L-aspartate: glycine 39, tryptophan 125, and asparagine 175. An N6-(pyridoxal phosphate)lysine modification is found at lysine 239. Arginine 375 provides a ligand contact to L-aspartate.

The protein belongs to the class-I pyridoxal-phosphate-dependent aminotransferase family. As to quaternary structure, homodimer. It depends on pyridoxal 5'-phosphate as a cofactor.

Its subcellular location is the cytoplasm. The catalysed reaction is L-aspartate + 2-oxoglutarate = oxaloacetate + L-glutamate. The enzyme catalyses L-arogenate + 2-oxoglutarate = prephenate + L-glutamate. Catalyzes the reversible conversion of aspartate and 2-oxoglutarate to glutamate and oxaloacetate. Can also transaminate prephenate in the presence of glutamate. The chain is Probable aspartate/prephenate aminotransferase (aatA) from Rickettsia bellii (strain RML369-C).